We begin with the raw amino-acid sequence, 709 residues long: Acyl-coenzyme A oxidase 4 (709 aa).

Over residues 1–12 the composition is skewed to polar residues; it reads MTFTKKNVSVSQ. The interval 1-29 is disordered; the sequence is MTFTKKNVSVSQGPDPRSSIQKERDSSKW.

This sequence belongs to the acyl-CoA oxidase family. Homooctamer. Requires FAD as cofactor.

Its subcellular location is the peroxisome. It catalyses the reaction a 2,3-saturated acyl-CoA + O2 = a (2E)-enoyl-CoA + H2O2. The protein operates within lipid metabolism; peroxisomal fatty acid beta-oxidation. This Candida tropicalis (Yeast) protein is Acyl-coenzyme A oxidase 4 (POX4).